We begin with the raw amino-acid sequence, 146 residues long: Core protein D2 (146 aa).

Belongs to the orthopoxvirus OPG114 family. As to quaternary structure, part of a complex composed of the kinase OPG054, OPG092, OPG100, OPG114, OPG115, OPG142 and OPG157.

The protein localises to the virion. In terms of biological role, late protein which is part of a large complex required for early virion morphogenesis. This complex participates in the formation of virosomes and the incorporation of virosomal contents into nascent immature virions. The sequence is that of Core protein D2 (OPG114) from Homo sapiens (Human).